Consider the following 413-residue polypeptide: Arginine biosynthesis bifunctional protein ArgJ (413 aa).

The substrate site is built by T158, K184, T195, E285, N408, and S413. The active-site Nucleophile is T195.

This sequence belongs to the ArgJ family. As to quaternary structure, heterotetramer of two alpha and two beta chains.

The protein localises to the cytoplasm. The catalysed reaction is N(2)-acetyl-L-ornithine + L-glutamate = N-acetyl-L-glutamate + L-ornithine. It catalyses the reaction L-glutamate + acetyl-CoA = N-acetyl-L-glutamate + CoA + H(+). It participates in amino-acid biosynthesis; L-arginine biosynthesis; L-ornithine and N-acetyl-L-glutamate from L-glutamate and N(2)-acetyl-L-ornithine (cyclic): step 1/1. Its pathway is amino-acid biosynthesis; L-arginine biosynthesis; N(2)-acetyl-L-ornithine from L-glutamate: step 1/4. Catalyzes two activities which are involved in the cyclic version of arginine biosynthesis: the synthesis of N-acetylglutamate from glutamate and acetyl-CoA as the acetyl donor, and of ornithine by transacetylation between N(2)-acetylornithine and glutamate. This is Arginine biosynthesis bifunctional protein ArgJ from Brucella melitensis biotype 1 (strain ATCC 23456 / CCUG 17765 / NCTC 10094 / 16M).